The chain runs to 411 residues: Mannan endo-1,4-beta-mannosidase 1 (411 aa).

The N-terminal stretch at 1-17 is a signal peptide; sequence MLNILPFFLFFLPFLIG. N-linked (GlcNAc...) asparagine glycosylation occurs at Asn33. The substrate site is built by Trp87 and Asn197. Glu198 (proton donor) is an active-site residue. N-linked (GlcNAc...) asparagine glycosylation occurs at Asn202. Tyr277 lines the substrate pocket. Glu319 serves as the catalytic Nucleophile. Substrate is bound at residue Trp361. N-linked (GlcNAc...) asparagine glycans are attached at residues Asn366 and Asn384.

This sequence belongs to the glycosyl hydrolase 5 (cellulase A) family. Expressed in roots, stems and flowers.

It localises to the secreted. It catalyses the reaction Random hydrolysis of (1-&gt;4)-beta-D-mannosidic linkages in mannans, galactomannans and glucomannans.. The sequence is that of Mannan endo-1,4-beta-mannosidase 1 (MAN1) from Arabidopsis thaliana (Mouse-ear cress).